The sequence spans 254 residues: MRAIIVDDEPLARNELHYLLNQINHFEKIDKAENVSETLELLLYDDYDVIFLDINLMDESGLDLANKIKKMKHAPFIIFATAHDTFAVKAFELDAIDYILKPFEQQRIAQAVHKVEQALGQTTEHHSDSYTTASMDTQNNEKTKTSKVLPIEVNERIHIINLDDIIAVSVNNGITTINTTLDDFETSEPLSHYEKKIETQNFMRIHRATLINKSHIQTIEHWFNYTYQLTMTNQLRFQVSRSYMKTFKQMMGLN.

One can recognise a Response regulatory domain in the interval 2–116 (RAIIVDDEPL…RIAQAVHKVE (115 aa)). Position 53 is a 4-aspartylphosphate (aspartate 53). The interval 120 to 143 (GQTTEHHSDSYTTASMDTQNNEKT) is disordered. The segment covering 129 to 138 (SYTTASMDTQ) has biased composition (polar residues). Positions 149–253 (LPIEVNERIH…MKTFKQMMGL (105 aa)) constitute an HTH LytTR-type domain.

In terms of processing, phosphorylated by LytS.

Its subcellular location is the cytoplasm. Its function is as follows. Member of the two-component regulatory system LytR/LytS that probably regulates genes involved in cell wall metabolism. The protein is Sensory transduction protein LytR (lytR) of Staphylococcus saprophyticus subsp. saprophyticus (strain ATCC 15305 / DSM 20229 / NCIMB 8711 / NCTC 7292 / S-41).